A 218-amino-acid chain; its full sequence is Small ribosomal subunit protein uS3c (218 aa).

A KH type-2 domain is found at valine 47 to proline 118.

This sequence belongs to the universal ribosomal protein uS3 family. Part of the 30S ribosomal subunit.

The protein localises to the plastid. Its subcellular location is the chloroplast. The sequence is that of Small ribosomal subunit protein uS3c (rps3) from Nuphar advena (Common spatterdock).